Here is a 254-residue protein sequence, read N- to C-terminus: DNA repair protein RecO (254 aa).

It belongs to the RecO family.

In terms of biological role, involved in DNA repair and RecF pathway recombination. The sequence is that of DNA repair protein RecO from Rhodopseudomonas palustris (strain BisB18).